Here is a 172-residue protein sequence, read N- to C-terminus: Acetolactate synthase small subunit (172 aa).

The ACT domain occupies 4–79 (IITLTVVNRS…DVLKVTDITN (76 aa)).

The protein belongs to the acetolactate synthase small subunit family. In terms of assembly, dimer of large and small chains.

It catalyses the reaction 2 pyruvate + H(+) = (2S)-2-acetolactate + CO2. The protein operates within amino-acid biosynthesis; L-isoleucine biosynthesis; L-isoleucine from 2-oxobutanoate: step 1/4. It participates in amino-acid biosynthesis; L-valine biosynthesis; L-valine from pyruvate: step 1/4. The protein is Acetolactate synthase small subunit (ilvH) of Bacillus subtilis (strain 168).